A 204-amino-acid polypeptide reads, in one-letter code: High frequency lysogenization protein HflD homolog (204 aa).

Belongs to the HflD family.

It localises to the cytoplasm. Its subcellular location is the cell inner membrane. This chain is High frequency lysogenization protein HflD homolog, found in Shewanella woodyi (strain ATCC 51908 / MS32).